A 168-amino-acid chain; its full sequence is Protein DESIGUAL 2 (168 aa).

An N-terminal signal peptide occupies residues 1-20 (MARNVGFFICILILAMDVSA). 3 consecutive transmembrane segments (helical) span residues 56–76 (LAAC…GGCL), 94–114 (AVAS…MLIV), and 133–153 (VLSI…AYYI).

Belongs to the DESIGUAL family. Mainly expressed in roots, inflorescences and developing leaves, and, at low levels, in mature leaves.

The protein resides in the endoplasmic reticulum membrane. In terms of biological role, involved, partially redundantly with VCC/DEAL1 and DEAL3, to ensure bilateral symmetry development and early leaf margin patterning, probably via the regulation of auxin and CUC2 distribution. The chain is Protein DESIGUAL 2 from Arabidopsis thaliana (Mouse-ear cress).